We begin with the raw amino-acid sequence, 443 residues long: Methyl-coenzyme M reductase I subunit beta (443 aa).

Y367 serves as a coordination point for coenzyme M. G369 serves as a coordination point for coenzyme B.

It belongs to the methyl-coenzyme M reductase beta subunit family. MCR is a hexamer of two alpha, two beta, and two gamma chains, forming a dimer of heterotrimers. The cofactor is coenzyme F430.

Its subcellular location is the cytoplasm. It catalyses the reaction coenzyme B + methyl-coenzyme M = methane + coenzyme M-coenzyme B heterodisulfide. Its pathway is one-carbon metabolism; methyl-coenzyme M reduction; methane from methyl-coenzyme M: step 1/1. Its activity is regulated as follows. Methyl-coenzyme M reductase activity is inhibited by 3-nitrooxypropanol (3-NOP) in vitro and in vivo, by oxidation of its active site Ni(I), which stops both growth and methanogenesis. Is also inhibited by the reaction product CoM-S-S-CoB. In terms of biological role, component of the methyl-coenzyme M reductase (MCR) I that catalyzes the reductive cleavage of methyl-coenzyme M (CoM-S-CH3 or 2-(methylthio)ethanesulfonate) using coenzyme B (CoB or 7-mercaptoheptanoylthreonine phosphate) as reductant which results in the production of methane and the mixed heterodisulfide of CoB and CoM (CoM-S-S-CoB). This is the final step in methanogenesis. Neither N-6-mercaptohexanoylthreonine phosphate (H-S-HxoTP) nor N-8-mercaptooctanoylthreonine phosphate (H-SOcoTP) nor any other thiol compound such as CoA or CoM can substitute for CoB as the electron donor. This chain is Methyl-coenzyme M reductase I subunit beta (mcrB), found in Methanothermobacter marburgensis (strain ATCC BAA-927 / DSM 2133 / JCM 14651 / NBRC 100331 / OCM 82 / Marburg) (Methanobacterium thermoautotrophicum).